Consider the following 182-residue polypeptide: CASP-like protein 2B1 (182 aa).

Topologically, residues 1-12 are cytoplasmic; sequence MKLIDRRMRLTE. A helical transmembrane segment spans residues 13-31; sequence LLLRCSISVFALLALILVV. Topologically, residues 32 to 52 are extracellular; that stretch reads TDTEVKLIFTIKKTAKYTDMK. The chain crosses the membrane as a helical span at residues 53-73; the sequence is AVVFLVVANGIAAVYSLLQSV. Residues 74 to 89 lie on the Cytoplasmic side of the membrane; it reads RCVVGTMKGKVLFSKP. The helical transmembrane segment at 90–110 threads the bilayer; the sequence is LAWAFFSGDQAMAYLNVAAIA. Residues 111–141 lie on the Extracellular side of the membrane; sequence ATAESGVIAREGEEDLQWMRVCTMYGKFCNQ. A helical membrane pass occupies residues 142-162; sequence MAIGVSSALLASIAMVFVSCI. The Cytoplasmic segment spans residues 163–182; it reads SAFSLFRLYGATKDRRTTPW.

The protein belongs to the Casparian strip membrane proteins (CASP) family. As to quaternary structure, homodimer and heterodimers.

The protein localises to the cell membrane. In Arabidopsis thaliana (Mouse-ear cress), this protein is CASP-like protein 2B1.